The sequence spans 367 residues: Zinc transport system membrane protein TroD (367 aa).

Transmembrane regions (helical) follow at residues 5-25, 28-48, 56-76, 87-107, 140-160, 170-190, 201-221, 224-244, and 251-271; these read VVLI…FLVL, ISLM…LGYF, FVPF…AELL, AVGL…SLYA, SLVQ…LFFK, VLAT…MLAV, VGAV…LLLT, LLLM…SGLF, and GSIA…VYLF.

This sequence belongs to the ABC-3 integral membrane protein family.

Its subcellular location is the cell membrane. In terms of biological role, part of an ATP-driven transport system TroABCD for zinc. This chain is Zinc transport system membrane protein TroD (troD), found in Treponema pallidum (strain Nichols).